A 350-amino-acid polypeptide reads, in one-letter code: tRNA pseudouridine synthase D (350 aa).

The Nucleophile role is filled by Asp-79. Positions 154 to 306 (GAPNYYGPQR…EQERRPIVLY (153 aa)) constitute a TRUD domain.

It belongs to the pseudouridine synthase TruD family.

It catalyses the reaction uridine(13) in tRNA = pseudouridine(13) in tRNA. Responsible for synthesis of pseudouridine from uracil-13 in transfer RNAs. The protein is tRNA pseudouridine synthase D of Pseudoalteromonas atlantica (strain T6c / ATCC BAA-1087).